Reading from the N-terminus, the 192-residue chain is Peptide methionine sulfoxide reductase MsrA 1 (192 aa).

Cysteine 25 is an active-site residue.

This sequence belongs to the MsrA Met sulfoxide reductase family.

The catalysed reaction is L-methionyl-[protein] + [thioredoxin]-disulfide + H2O = L-methionyl-(S)-S-oxide-[protein] + [thioredoxin]-dithiol. It carries out the reaction [thioredoxin]-disulfide + L-methionine + H2O = L-methionine (S)-S-oxide + [thioredoxin]-dithiol. In terms of biological role, has an important function as a repair enzyme for proteins that have been inactivated by oxidation. Catalyzes the reversible oxidation-reduction of methionine sulfoxide in proteins to methionine. The polypeptide is Peptide methionine sulfoxide reductase MsrA 1 (Rhodopirellula baltica (strain DSM 10527 / NCIMB 13988 / SH1)).